A 309-amino-acid chain; its full sequence is NAD kinase (309 aa).

Aspartate 89 functions as the Proton acceptor in the catalytic mechanism. NAD(+) is bound by residues 89-90 (DG), 163-164 (NE), histidine 174, arginine 191, aspartate 193, and 204-209 (TAYALS).

Belongs to the NAD kinase family. A divalent metal cation is required as a cofactor.

Its subcellular location is the cytoplasm. The enzyme catalyses NAD(+) + ATP = ADP + NADP(+) + H(+). Its function is as follows. Involved in the regulation of the intracellular balance of NAD and NADP, and is a key enzyme in the biosynthesis of NADP. Catalyzes specifically the phosphorylation on 2'-hydroxyl of the adenosine moiety of NAD to yield NADP. The sequence is that of NAD kinase from Shewanella sp. (strain W3-18-1).